A 423-amino-acid chain; its full sequence is 3-phosphoshikimate 1-carboxyvinyltransferase (423 aa).

3 residues coordinate 3-phosphoshikimate: Lys19, Ser20, and Arg24. Lys19 provides a ligand contact to phosphoenolpyruvate. Phosphoenolpyruvate contacts are provided by Gly89 and Arg118. 3-phosphoshikimate is bound by residues Ser164, Ser165, Gln166, Ser192, Asp304, and Lys331. Phosphoenolpyruvate is bound at residue Gln166. Asp304 (proton acceptor) is an active-site residue. Phosphoenolpyruvate is bound by residues Arg335 and Arg377.

Belongs to the EPSP synthase family. In terms of assembly, monomer.

The protein resides in the cytoplasm. The enzyme catalyses 3-phosphoshikimate + phosphoenolpyruvate = 5-O-(1-carboxyvinyl)-3-phosphoshikimate + phosphate. It functions in the pathway metabolic intermediate biosynthesis; chorismate biosynthesis. Catalyzes the transfer of the enolpyruvyl moiety of phosphoenolpyruvate (PEP) to the 5-hydroxyl of shikimate-3-phosphate (S3P) to produce enolpyruvyl shikimate-3-phosphate and inorganic phosphate. This chain is 3-phosphoshikimate 1-carboxyvinyltransferase, found in Korarchaeum cryptofilum (strain OPF8).